Here is a 231-residue protein sequence, read N- to C-terminus: 5'-methylthioadenosine/S-adenosylhomocysteine nucleosidase (231 aa).

Catalysis depends on Glu-12, which acts as the Proton acceptor. Substrate is bound by residues Gly-78, Val-153, and 174–175 (ME). Catalysis depends on Asp-198, which acts as the Proton donor.

The protein belongs to the PNP/UDP phosphorylase family. MtnN subfamily.

The enzyme catalyses S-adenosyl-L-homocysteine + H2O = S-(5-deoxy-D-ribos-5-yl)-L-homocysteine + adenine. It catalyses the reaction S-methyl-5'-thioadenosine + H2O = 5-(methylsulfanyl)-D-ribose + adenine. It carries out the reaction 5'-deoxyadenosine + H2O = 5-deoxy-D-ribose + adenine. Its pathway is amino-acid biosynthesis; L-methionine biosynthesis via salvage pathway; S-methyl-5-thio-alpha-D-ribose 1-phosphate from S-methyl-5'-thioadenosine (hydrolase route): step 1/2. In terms of biological role, catalyzes the irreversible cleavage of the glycosidic bond in both 5'-methylthioadenosine (MTA) and S-adenosylhomocysteine (SAH/AdoHcy) to adenine and the corresponding thioribose, 5'-methylthioribose and S-ribosylhomocysteine, respectively. Also cleaves 5'-deoxyadenosine, a toxic by-product of radical S-adenosylmethionine (SAM) enzymes, into 5-deoxyribose and adenine. The polypeptide is 5'-methylthioadenosine/S-adenosylhomocysteine nucleosidase (Aliivibrio salmonicida (strain LFI1238) (Vibrio salmonicida (strain LFI1238))).